A 164-amino-acid polypeptide reads, in one-letter code: Nitrogen regulatory protein homolog (164 aa).

In terms of domain architecture, PTS EIIA type-2 spans 5 to 152; the sequence is ELLSPENIRQ…DEIWQVFEIT (148 aa).

Its function is as follows. Not known; lacks the phosphorylation site found in other PtsN proteins. The protein is Nitrogen regulatory protein homolog (ptsN) of Haemophilus influenzae (strain ATCC 51907 / DSM 11121 / KW20 / Rd).